Consider the following 197-residue polypeptide: Holliday junction branch migration complex subunit RuvA (197 aa).

Residues 1-63 (MFEYLNGKLV…EDAHSLYGFV (63 aa)) form a domain I region. A domain II region spans residues 64–142 (NEAEKALFLR…ATGTVGISLL (79 aa)). The tract at residues 142–146 (LDAGP) is flexible linker. Residues 147 to 197 (AGNLALEEAIEALQALGYKATELKKIEKKLAQETGLTSEEYIKSALKLMMK) are domain III.

It belongs to the RuvA family. Homotetramer. Forms an RuvA(8)-RuvB(12)-Holliday junction (HJ) complex. HJ DNA is sandwiched between 2 RuvA tetramers; dsDNA enters through RuvA and exits via RuvB. An RuvB hexamer assembles on each DNA strand where it exits the tetramer. Each RuvB hexamer is contacted by two RuvA subunits (via domain III) on 2 adjacent RuvB subunits; this complex drives branch migration. In the full resolvosome a probable DNA-RuvA(4)-RuvB(12)-RuvC(2) complex forms which resolves the HJ.

The protein localises to the cytoplasm. Its function is as follows. The RuvA-RuvB-RuvC complex processes Holliday junction (HJ) DNA during genetic recombination and DNA repair, while the RuvA-RuvB complex plays an important role in the rescue of blocked DNA replication forks via replication fork reversal (RFR). RuvA specifically binds to HJ cruciform DNA, conferring on it an open structure. The RuvB hexamer acts as an ATP-dependent pump, pulling dsDNA into and through the RuvAB complex. HJ branch migration allows RuvC to scan DNA until it finds its consensus sequence, where it cleaves and resolves the cruciform DNA. The chain is Holliday junction branch migration complex subunit RuvA from Lactococcus lactis subsp. lactis (strain IL1403) (Streptococcus lactis).